The primary structure comprises 75 residues: Small ribosomal subunit protein bS18c (75 aa).

The protein belongs to the bacterial ribosomal protein bS18 family. As to quaternary structure, part of the 30S ribosomal subunit.

It is found in the plastid. The protein resides in the chloroplast. The protein is Small ribosomal subunit protein bS18c (rps18) of Anthoceros angustus (Hornwort).